Reading from the N-terminus, the 156-residue chain is Small ribosomal subunit protein uS7 (156 aa).

It belongs to the universal ribosomal protein uS7 family. In terms of assembly, part of the 30S ribosomal subunit. Contacts proteins S9 and S11.

Its function is as follows. One of the primary rRNA binding proteins, it binds directly to 16S rRNA where it nucleates assembly of the head domain of the 30S subunit. Is located at the subunit interface close to the decoding center, probably blocks exit of the E-site tRNA. This Bacillus cereus (strain G9842) protein is Small ribosomal subunit protein uS7.